Reading from the N-terminus, the 283-residue chain is RNase adapter protein RapZ (283 aa).

Residue Gly8–Ser15 coordinates ATP. Asp56–Asn59 is a GTP binding site. An RNA-binding region spans residues Arg266–Lys283.

The protein belongs to the RapZ-like family. RapZ subfamily. In terms of assembly, homotrimer.

In terms of biological role, modulates the synthesis of GlmS, by affecting the processing and stability of the regulatory small RNA GlmZ. When glucosamine-6-phosphate (GlcN6P) concentrations are high in the cell, RapZ binds GlmZ and targets it to cleavage by RNase E. Consequently, GlmZ is inactivated and unable to activate GlmS synthesis. Under low GlcN6P concentrations, RapZ is sequestered and inactivated by an other regulatory small RNA, GlmY, preventing GlmZ degradation and leading to synthesis of GlmS. This chain is RNase adapter protein RapZ, found in Yersinia enterocolitica serotype O:8 / biotype 1B (strain NCTC 13174 / 8081).